We begin with the raw amino-acid sequence, 380 residues long: Fibromodulin (380 aa).

An N-terminal signal peptide occupies residues 1-18; that stretch reads MRWANILLVAGLCRASLG. Residues 71–109 enclose the LRRNT domain; that stretch reads EAQQASSWQCPQECDCPPNFSSAMYCDTRNLRYLPFVPT. Residue Asn-89 is glycosylated (N-linked (GlcNAc...) asparagine). LRR repeat units follow at residues 110 to 131, 134 to 147, 160 to 180, 181 to 202, 205 to 227, 228 to 248, 249 to 270, and 273 to 293; these read RMKY…AFDN, ELEW…QISS, NLER…PLPR, SLRE…ALEG, NLTA…KGLK, SLIL…GLPM, ALEQ…YFKV, and KLLY…STNT. The N-linked (GlcNAc...) (keratan sulfate) asparagine glycan is linked to Asn-131. N-linked (GlcNAc...) (keratan sulfate) asparagine glycosylation occurs at Asn-170. Residue Asn-205 is glycosylated (N-linked (GlcNAc...) (keratan sulfate) asparagine). N-linked (GlcNAc...) (keratan sulfate) asparagine glycosylation is present at Asn-295. LRR repeat units follow at residues 298–317 and 318–339; these read SILE…RVST and NLEN…SFCT. An intrachain disulfide couples Cys-338 to Cys-371. N-linked (GlcNAc...) asparagine glycosylation occurs at Asn-345. An LRR 11 repeat occupies 348–371; sequence RLQVLRLDGNEIKRNAMPPDAPLC.

Belongs to the small leucine-rich proteoglycan (SLRP) family. SLRP class II subfamily. As to quaternary structure, binds to type I and type II collagen. Binds keratan sulfate chains.

Its subcellular location is the secreted. It is found in the extracellular space. The protein localises to the extracellular matrix. Its function is as follows. Affects the rate of fibrils formation. May have a primary role in collagen fibrillogenesis. This Gallus gallus (Chicken) protein is Fibromodulin (FMOD).